The following is a 444-amino-acid chain: Spermidine/putrescine import ATP-binding protein PotA (444 aa).

The region spanning 11 to 332 is the ABC transporter domain; sequence ISLVDVDKEF…PVNKWVANFI (322 aa). 43 to 50 serves as a coordination point for ATP; sequence GPSGSGKT. Residues 111–201 form an insert region; that stretch reads RIKKKAEEIP…ESFKKKYLTR (91 aa).

It belongs to the ABC transporter superfamily. Spermidine/putrescine importer (TC 3.A.1.11.1) family. In terms of assembly, the complex is composed of two ATP-binding proteins (PotA), two transmembrane proteins (PotB and PotC) and a solute-binding protein (PotD).

It localises to the cell membrane. The catalysed reaction is ATP + H2O + polyamine-[polyamine-binding protein]Side 1 = ADP + phosphate + polyamineSide 2 + [polyamine-binding protein]Side 1.. Functionally, part of the ABC transporter complex PotABCD involved in spermidine/putrescine import. Responsible for energy coupling to the transport system. The protein is Spermidine/putrescine import ATP-binding protein PotA of Mesomycoplasma hyopneumoniae (strain J / ATCC 25934 / NCTC 10110) (Mycoplasma hyopneumoniae).